A 962-amino-acid chain; its full sequence is Glycine dehydrogenase (decarboxylating) (962 aa).

Lys709 bears the N6-(pyridoxal phosphate)lysine mark.

This sequence belongs to the GcvP family. In terms of assembly, the glycine cleavage system is composed of four proteins: P, T, L and H. Pyridoxal 5'-phosphate is required as a cofactor.

It catalyses the reaction N(6)-[(R)-lipoyl]-L-lysyl-[glycine-cleavage complex H protein] + glycine + H(+) = N(6)-[(R)-S(8)-aminomethyldihydrolipoyl]-L-lysyl-[glycine-cleavage complex H protein] + CO2. The glycine cleavage system catalyzes the degradation of glycine. The P protein binds the alpha-amino group of glycine through its pyridoxal phosphate cofactor; CO(2) is released and the remaining methylamine moiety is then transferred to the lipoamide cofactor of the H protein. This Shewanella baltica (strain OS155 / ATCC BAA-1091) protein is Glycine dehydrogenase (decarboxylating).